The following is a 513-amino-acid chain: ATP synthase subunit alpha 1 (513 aa).

169–176 (GDRQTGKT) is a binding site for ATP.

It belongs to the ATPase alpha/beta chains family. In terms of assembly, F-type ATPases have 2 components, CF(1) - the catalytic core - and CF(0) - the membrane proton channel. CF(1) has five subunits: alpha(3), beta(3), gamma(1), delta(1), epsilon(1). CF(0) has three main subunits: a(1), b(2) and c(9-12). The alpha and beta chains form an alternating ring which encloses part of the gamma chain. CF(1) is attached to CF(0) by a central stalk formed by the gamma and epsilon chains, while a peripheral stalk is formed by the delta and b chains.

It localises to the cell inner membrane. It catalyses the reaction ATP + H2O + 4 H(+)(in) = ADP + phosphate + 5 H(+)(out). In terms of biological role, produces ATP from ADP in the presence of a proton gradient across the membrane. The alpha chain is a regulatory subunit. The polypeptide is ATP synthase subunit alpha 1 (Nitrosospira multiformis (strain ATCC 25196 / NCIMB 11849 / C 71)).